The chain runs to 265 residues: uncharacterized protein (265 aa).

Residues 1-160 form a disordered region; it reads MDKSKNLFDL…STEPVVAAPV (160 aa). A compositionally biased stretch (low complexity) spans 28–42; that stretch reads AAAAPVAAKKPVAPK. Basic and acidic residues-rich tracts occupy residues 73–85 and 102–119; these read SEERQNTKRDSKS and RQFDRKSGTGRPHNENKK.

It belongs to the SERBP1-HABP4 family.

In terms of biological role, ribosome-binding protein that acts as a regulator of mRNA translation by promoting ribosome inactivation. This is an uncharacterized protein from Dictyostelium discoideum (Social amoeba).